The sequence spans 45 residues: Osteocalcin (45 aa).

The 44-residue stretch at 1-44 (AGTAXGDLTPFQLESLREVCEVNLACEHMADTXGIVAAYTAYYG) folds into the Gla domain. Ca(2+)-binding residues include Glu14, Glu18, Glu21, and Glu27. 4-carboxyglutamate occurs at positions 14, 18, and 21. A disulfide bridge links Cys20 with Cys26.

This sequence belongs to the osteocalcin/matrix Gla protein family. Post-translationally, gamma-carboxyglutamate residues are formed by vitamin K dependent carboxylation by GGCX. These residues are essential for the binding of calcium.

It localises to the secreted. In terms of biological role, the carboxylated form is one of the main organic components of the bone matrix, which constitutes 1-2% of the total bone protein. The carboxylated form binds strongly to apatite and calcium. The chain is Osteocalcin (bglap) from Danio rerio (Zebrafish).